A 247-amino-acid polypeptide reads, in one-letter code: Ubiquinone biosynthesis O-methyltransferase (247 aa).

S-adenosyl-L-methionine-binding residues include Arg-39, Gly-70, Asp-91, and Met-134.

The protein belongs to the methyltransferase superfamily. UbiG/COQ3 family.

The catalysed reaction is a 3-demethylubiquinol + S-adenosyl-L-methionine = a ubiquinol + S-adenosyl-L-homocysteine + H(+). It carries out the reaction a 3-(all-trans-polyprenyl)benzene-1,2-diol + S-adenosyl-L-methionine = a 2-methoxy-6-(all-trans-polyprenyl)phenol + S-adenosyl-L-homocysteine + H(+). It functions in the pathway cofactor biosynthesis; ubiquinone biosynthesis. Functionally, O-methyltransferase that catalyzes the 2 O-methylation steps in the ubiquinone biosynthetic pathway. The protein is Ubiquinone biosynthesis O-methyltransferase of Cereibacter sphaeroides (strain KD131 / KCTC 12085) (Rhodobacter sphaeroides).